Consider the following 374-residue polypeptide: Layilin (374 aa).

Positions 1–24 are cleaved as a signal peptide; sequence MQPGPALQAVLLAVLLSEPRSSKG. Residues 25–221 lie on the Extracellular side of the membrane; sequence RLLSGQLVCR…TKETFKESRE (197 aa). The region spanning 37-177 is the C-type lectin domain; sequence TRRPCYKVIY…CNMKNNFICK (141 aa). 2 cysteine pairs are disulfide-bonded: C63/C176 and C142/C168. A glycan (N-linked (GlcNAc...) asparagine) is linked at N109. Residues 184–212 are disordered; the sequence is STTPSIRPGGEATEPPTPVLPEETQKEDT. The chain crosses the membrane as a helical span at residues 222-242; sequence AALNLAYILIPSIPLFLLLVV. At 243–374 the chain is on the cytoplasmic side; sequence TSAACWVWIC…SGWVENEIYY (132 aa). 2 positions are modified to phosphoserine: S279 and S292. Positions 323–367 are interaction with NF2; sequence DYDNMAVNPSESGFVTLASMESGFVTNDIYEFSPDRMGRSKESGW. Residues 330-374 form an interaction with TLN1 region; it reads NPSESGFVTLASMESGFVTNDIYEFSPDRMGRSKESGWVENEIYY. A run of 5 repeats spans residues 333-337, 343-347, 349-352, 364-368, and 370-373. The tract at residues 333-368 is 3 X 5 AA repeats of E-S-G-X-V; it reads ESGFVTLASMESGFVTNDIYEFSPDRMGRSKESGWV. A 2 X 4 AA repeats of N-X-I-Y region spans residues 349 to 373; that stretch reads NDIYEFSPDRMGRSKESGWVENEIY.

As to quaternary structure, interacts with NF2 and RDX. Interacts with TLN1. As to expression, widely expressed. Abundant in the ovary.

The protein localises to the membrane. In terms of biological role, receptor for hyaluronate. The polypeptide is Layilin (LAYN) (Cricetulus griseus (Chinese hamster)).